The sequence spans 1818 residues: Cytadherence high molecular weight protein 2 (1818 aa).

Coiled coils occupy residues 31–880, 919–1607, 1644–1755, and 1786–1817; these read LESA…KQRE, ELKI…DNKH, HLFE…QAVQ, and LATQ…QKAA.

In terms of processing, phosphorylated mainly on serine residues.

In terms of biological role, component of the cytoskeleton-like structure which stabilizes the shape of the wall-less Mycoplasma. This cytoskeleton-like network of accessory proteins containing HMW proteins 1 to 5 allows the proper anchoring of cytadhesin proteins in the mycoplasmal membrane at the attachment organelle. The chain is Cytadherence high molecular weight protein 2 (hmw2) from Mycoplasma pneumoniae (strain ATCC 29342 / M129 / Subtype 1) (Mycoplasmoides pneumoniae).